Here is a 172-residue protein sequence, read N- to C-terminus: 3-hydroxydecanoyl-[acyl-carrier-protein] dehydratase (172 aa).

Residue H71 is part of the active site.

The protein belongs to the thioester dehydratase family. FabA subfamily. Homodimer.

It localises to the cytoplasm. It catalyses the reaction a (3R)-hydroxyacyl-[ACP] = a (2E)-enoyl-[ACP] + H2O. The catalysed reaction is (3R)-hydroxydecanoyl-[ACP] = (2E)-decenoyl-[ACP] + H2O. It carries out the reaction (2E)-decenoyl-[ACP] = (3Z)-decenoyl-[ACP]. Its pathway is lipid metabolism; fatty acid biosynthesis. Necessary for the introduction of cis unsaturation into fatty acids. Catalyzes the dehydration of (3R)-3-hydroxydecanoyl-ACP to E-(2)-decenoyl-ACP and then its isomerization to Z-(3)-decenoyl-ACP. Can catalyze the dehydratase reaction for beta-hydroxyacyl-ACPs with saturated chain lengths up to 16:0, being most active on intermediate chain length. The polypeptide is 3-hydroxydecanoyl-[acyl-carrier-protein] dehydratase (Pectobacterium carotovorum subsp. carotovorum (strain PC1)).